We begin with the raw amino-acid sequence, 113 residues long: Retrotransposon Gag-like protein 8B (113 aa).

This sequence belongs to the FAM127 family.

This Homo sapiens (Human) protein is Retrotransposon Gag-like protein 8B (RTL8B).